The following is a 236-amino-acid chain: Small ribosomal subunit protein uS3 (236 aa).

The 69-residue stretch at 39–107 (IREFLTEELK…DTSLNIVEVR (69 aa)) folds into the KH type-2 domain. Positions 214–236 (ASERRAVEGDNQGSSSNRRRENA) are disordered.

Belongs to the universal ribosomal protein uS3 family. As to quaternary structure, part of the 30S ribosomal subunit. Forms a tight complex with proteins S10 and S14.

Functionally, binds the lower part of the 30S subunit head. Binds mRNA in the 70S ribosome, positioning it for translation. The sequence is that of Small ribosomal subunit protein uS3 from Brucella anthropi (strain ATCC 49188 / DSM 6882 / CCUG 24695 / JCM 21032 / LMG 3331 / NBRC 15819 / NCTC 12168 / Alc 37) (Ochrobactrum anthropi).